A 230-amino-acid polypeptide reads, in one-letter code: Uracil-DNA glycosylase (230 aa).

Catalysis depends on D70, which acts as the Proton acceptor.

This sequence belongs to the uracil-DNA glycosylase (UDG) superfamily. UNG family.

It localises to the cytoplasm. The enzyme catalyses Hydrolyzes single-stranded DNA or mismatched double-stranded DNA and polynucleotides, releasing free uracil.. Excises uracil residues from the DNA which can arise as a result of misincorporation of dUMP residues by DNA polymerase or due to deamination of cytosine. The sequence is that of Uracil-DNA glycosylase from Pseudomonas putida (strain GB-1).